Consider the following 368-residue polypeptide: D-Ala-D/L-Ala epimerase (368 aa).

Residues Thr135 and 160–162 (KVK) contribute to the substrate site. Positions 190, 216, and 241 each coordinate Mg(2+). Residues Lys265 and 318–320 (DFD) each bind substrate.

It belongs to the mandelate racemase/muconate lactonizing enzyme family. It depends on Mg(2+) as a cofactor.

In terms of biological role, catalyzes the epimerization of D-Ala-D-Ala to D-Ala-L-Ala. Has broad substrate specificity and catalyzes the epimerization of a variety of dipeptides containing an N-terminal Ala followed by a hydrophobic or polar residue, such as Val, Ser and Met (in vitro). In Cytophaga hutchinsonii (strain ATCC 33406 / DSM 1761 / CIP 103989 / NBRC 15051 / NCIMB 9469 / D465), this protein is D-Ala-D/L-Ala epimerase (tfdD).